Here is a 279-residue protein sequence, read N- to C-terminus: HTH-type transcriptional activator RhaS (279 aa).

Residues 175–273 enclose the HTH araC/xylS-type domain; that stretch reads QALLGWLQNN…SQAPKSLRHQ (99 aa). 2 consecutive DNA-binding regions (H-T-H motif) follow at residues 192–213 and 240–263; these read GGLA…KQHT and ITTI…RKAF.

In terms of assembly, binds DNA as a dimer.

It is found in the cytoplasm. Activates expression of the rhaBAD and rhaT operons. The chain is HTH-type transcriptional activator RhaS from Pectobacterium atrosepticum (strain SCRI 1043 / ATCC BAA-672) (Erwinia carotovora subsp. atroseptica).